Consider the following 231-residue polypeptide: Cytochrome c oxidase subunit 2 (231 aa).

Residues 1-14 lie on the Mitochondrial intermembrane side of the membrane; the sequence is MAHPAQLGLQNATS. A helical membrane pass occupies residues 15-45; sequence PIMEELIAFHDHALMIIFLISSLVLYIISLM. The Mitochondrial matrix portion of the chain corresponds to 46-59; the sequence is LTTKLTHTSTMNAQ. The chain crosses the membrane as a helical span at residues 60 to 87; sequence EIEMVWTILPAIILIMIALPSLRILYMT. Topologically, residues 88–231 are mitochondrial intermembrane; sequence DEFNKPYLTL…WASYLYIVSL (144 aa). Positions 161, 196, 198, 200, 204, and 207 each coordinate Cu cation. Glu198 is a binding site for Mg(2+).

This sequence belongs to the cytochrome c oxidase subunit 2 family. Component of the cytochrome c oxidase (complex IV, CIV), a multisubunit enzyme composed of 14 subunits. The complex is composed of a catalytic core of 3 subunits MT-CO1, MT-CO2 and MT-CO3, encoded in the mitochondrial DNA, and 11 supernumerary subunits COX4I, COX5A, COX5B, COX6A, COX6B, COX6C, COX7A, COX7B, COX7C, COX8 and NDUFA4, which are encoded in the nuclear genome. The complex exists as a monomer or a dimer and forms supercomplexes (SCs) in the inner mitochondrial membrane with NADH-ubiquinone oxidoreductase (complex I, CI) and ubiquinol-cytochrome c oxidoreductase (cytochrome b-c1 complex, complex III, CIII), resulting in different assemblies (supercomplex SCI(1)III(2)IV(1) and megacomplex MCI(2)III(2)IV(2)). Found in a complex with TMEM177, COA6, COX18, COX20, SCO1 and SCO2. Interacts with TMEM177 in a COX20-dependent manner. Interacts with COX20. Interacts with COX16. Cu cation is required as a cofactor.

The protein resides in the mitochondrion inner membrane. The catalysed reaction is 4 Fe(II)-[cytochrome c] + O2 + 8 H(+)(in) = 4 Fe(III)-[cytochrome c] + 2 H2O + 4 H(+)(out). In terms of biological role, component of the cytochrome c oxidase, the last enzyme in the mitochondrial electron transport chain which drives oxidative phosphorylation. The respiratory chain contains 3 multisubunit complexes succinate dehydrogenase (complex II, CII), ubiquinol-cytochrome c oxidoreductase (cytochrome b-c1 complex, complex III, CIII) and cytochrome c oxidase (complex IV, CIV), that cooperate to transfer electrons derived from NADH and succinate to molecular oxygen, creating an electrochemical gradient over the inner membrane that drives transmembrane transport and the ATP synthase. Cytochrome c oxidase is the component of the respiratory chain that catalyzes the reduction of oxygen to water. Electrons originating from reduced cytochrome c in the intermembrane space (IMS) are transferred via the dinuclear copper A center (CU(A)) of subunit 2 and heme A of subunit 1 to the active site in subunit 1, a binuclear center (BNC) formed by heme A3 and copper B (CU(B)). The BNC reduces molecular oxygen to 2 water molecules using 4 electrons from cytochrome c in the IMS and 4 protons from the mitochondrial matrix. In Lagothrix lagotricha (Brown woolly monkey), this protein is Cytochrome c oxidase subunit 2 (MT-CO2).